Reading from the N-terminus, the 120-residue chain is U13-barytoxin-Tl1a (120 aa).

An N-terminal signal peptide occupies residues 1–20; the sequence is MKTIIVFLSLLVLATKFGDA. 3 disulfide bridges follow: Cys-75–Cys-90, Cys-82–Cys-95, and Cys-89–Cys-109.

Belongs to the neurotoxin 14 (magi-1) family. 05 (ICK-7) subfamily. ICK-7 sub-subfamily. Expressed by the venom gland.

The protein resides in the secreted. Ion channel inhibitor. The polypeptide is U13-barytoxin-Tl1a (Trittame loki (Brush-footed trapdoor spider)).